Reading from the N-terminus, the 442-residue chain is Chromosomal replication initiator protein DnaA (442 aa).

Residues 1 to 75 (MDAWPRCLER…GNGEVALAVG (75 aa)) form a domain I, interacts with DnaA modulators region. The domain II stretch occupies residues 75 to 104 (GSRPRAPEPLPAPQAVASAPAAAPIVPFAG). Residues 105-322 (NLDSHYTFAN…GALNTLVARA (218 aa)) are domain III, AAA+ region. Positions 150, 152, 153, and 154 each coordinate ATP. The tract at residues 323 to 442 (NFTGRSITVE…WEKLIRKLSE (120 aa)) is domain IV, binds dsDNA.

The protein belongs to the DnaA family. Oligomerizes as a right-handed, spiral filament on DNA at oriC.

The protein localises to the cytoplasm. Functionally, plays an essential role in the initiation and regulation of chromosomal replication. ATP-DnaA binds to the origin of replication (oriC) to initiate formation of the DNA replication initiation complex once per cell cycle. Binds the DnaA box (a 9 base pair repeat at the origin) and separates the double-stranded (ds)DNA. Forms a right-handed helical filament on oriC DNA; dsDNA binds to the exterior of the filament while single-stranded (ss)DNA is stabiized in the filament's interior. The ATP-DnaA-oriC complex binds and stabilizes one strand of the AT-rich DNA unwinding element (DUE), permitting loading of DNA polymerase. After initiation quickly degrades to an ADP-DnaA complex that is not apt for DNA replication. Binds acidic phospholipids. This is Chromosomal replication initiator protein DnaA from Xanthomonas campestris pv. campestris (strain B100).